Here is a 386-residue protein sequence, read N- to C-terminus: Ethanolamine kinase 2 (386 aa).

It belongs to the choline/ethanolamine kinase family. In terms of tissue distribution, expressed in kidney, liver, ovary, testis and prostate.

It carries out the reaction ethanolamine + ATP = phosphoethanolamine + ADP + H(+). It participates in phospholipid metabolism; phosphatidylethanolamine biosynthesis; phosphatidylethanolamine from ethanolamine: step 1/3. Its function is as follows. Highly specific for ethanolamine phosphorylation. Does not have choline kinase activity. The protein is Ethanolamine kinase 2 (ETNK2) of Homo sapiens (Human).